We begin with the raw amino-acid sequence, 313 residues long: Solute carrier family 35 member E3 (313 aa).

The next 9 helical transmembrane spans lie at 17–37 (GLLF…WIYV), 40–60 (GFPN…GLYI), 71–91 (SLPL…VVFT), 126–146 (FSVR…LNSY), 154–174 (LGMV…VWVG), 187–206 (LLYY…VPFF), 225–245 (LMVL…YWII), 252–272 (TYNM…YILF), and 275–295 (PLSV…LTYT).

It belongs to the TPT transporter family. SLC35E subfamily.

The protein resides in the membrane. Functionally, putative transporter. The protein is Solute carrier family 35 member E3 (Slc35e3) of Mus musculus (Mouse).